The chain runs to 223 residues: Exosome complex component RRP46 (223 aa).

This sequence belongs to the RNase PH family. In terms of assembly, component of the RNA exosome complex. Specifically part of the catalytically inactive RNA exosome core complex (Exo-9) which may associate with the catalytic subunits RRP6 and DIS3 in cytoplasmic- and nuclear-specific RNA exosome complex forms. Exo-9 is formed by a hexameric base ring of RNase PH domain-containing subunits and a cap ring consisting of CSL4, RRP4 and RRP40.

It is found in the cytoplasm. The protein resides in the nucleus. Its subcellular location is the nucleolus. Non-catalytic component of the RNA exosome complex which has 3'-&gt;5' exoribonuclease activity and participates in a multitude of cellular RNA processing and degradation events. In the nucleus, the RNA exosome complex is involved in proper maturation of stable RNA species such as rRNA, snRNA and snoRNA, in the elimination of RNA processing by-products and non-coding 'pervasive' transcripts, such as antisense RNA species and cryptic unstable transcripts (CUTs), and of mRNAs with processing defects, thereby limiting or excluding their export to the cytoplasm. In the cytoplasm, the RNA exosome complex is involved in general mRNA turnover and in RNA surveillance pathways, preventing translation of aberrant mRNAs. The catalytic inactive RNA exosome core complex of 9 subunits (Exo-9) is proposed to play a pivotal role in the binding and presentation of RNA for ribonucleolysis, and to serve as a scaffold for the association with catalytic subunits and accessory proteins or complexes. RRP46 is part of the hexameric ring of RNase PH domain-containing subunits proposed to form a central channel which threads RNA substrates for degradation. In Saccharomyces cerevisiae (strain ATCC 204508 / S288c) (Baker's yeast), this protein is Exosome complex component RRP46 (RRP46).